The primary structure comprises 264 residues: Thiazole synthase (264 aa).

The active-site Schiff-base intermediate with DXP is Lys-98. 1-deoxy-D-xylulose 5-phosphate is bound by residues Gly-159, Ala-185 to Gly-186, and Ala-207 to Ser-208. Residues His-243–Phe-264 are disordered. The segment covering Gly-253–Phe-264 has biased composition (basic and acidic residues).

This sequence belongs to the ThiG family. Homotetramer. Forms heterodimers with either ThiH or ThiS.

It is found in the cytoplasm. The catalysed reaction is [ThiS sulfur-carrier protein]-C-terminal-Gly-aminoethanethioate + 2-iminoacetate + 1-deoxy-D-xylulose 5-phosphate = [ThiS sulfur-carrier protein]-C-terminal Gly-Gly + 2-[(2R,5Z)-2-carboxy-4-methylthiazol-5(2H)-ylidene]ethyl phosphate + 2 H2O + H(+). The protein operates within cofactor biosynthesis; thiamine diphosphate biosynthesis. In terms of biological role, catalyzes the rearrangement of 1-deoxy-D-xylulose 5-phosphate (DXP) to produce the thiazole phosphate moiety of thiamine. Sulfur is provided by the thiocarboxylate moiety of the carrier protein ThiS. In vitro, sulfur can be provided by H(2)S. This Streptomyces avermitilis (strain ATCC 31267 / DSM 46492 / JCM 5070 / NBRC 14893 / NCIMB 12804 / NRRL 8165 / MA-4680) protein is Thiazole synthase.